The following is a 471-amino-acid chain: ATP synthase subunit beta (471 aa).

156 to 163 (GGAGVGKT) is an ATP binding site.

It belongs to the ATPase alpha/beta chains family. As to quaternary structure, F-type ATPases have 2 components, CF(1) - the catalytic core - and CF(0) - the membrane proton channel. CF(1) has five subunits: alpha(3), beta(3), gamma(1), delta(1), epsilon(1). CF(0) has three main subunits: a(1), b(2) and c(9-12). The alpha and beta chains form an alternating ring which encloses part of the gamma chain. CF(1) is attached to CF(0) by a central stalk formed by the gamma and epsilon chains, while a peripheral stalk is formed by the delta and b chains.

The protein resides in the cell inner membrane. The enzyme catalyses ATP + H2O + 4 H(+)(in) = ADP + phosphate + 5 H(+)(out). Produces ATP from ADP in the presence of a proton gradient across the membrane. The catalytic sites are hosted primarily by the beta subunits. The protein is ATP synthase subunit beta of Nitratidesulfovibrio vulgaris (strain DSM 19637 / Miyazaki F) (Desulfovibrio vulgaris).